The sequence spans 189 residues: UPF0301 protein PA14_05290 (189 aa).

It belongs to the UPF0301 (AlgH) family.

In Pseudomonas aeruginosa (strain UCBPP-PA14), this protein is UPF0301 protein PA14_05290.